The chain runs to 241 residues: Ribonuclease PH (241 aa).

Phosphate is bound by residues arginine 87 and 125 to 127 (GTR).

It belongs to the RNase PH family. Homohexameric ring arranged as a trimer of dimers.

It carries out the reaction tRNA(n+1) + phosphate = tRNA(n) + a ribonucleoside 5'-diphosphate. Functionally, phosphorolytic 3'-5' exoribonuclease that plays an important role in tRNA 3'-end maturation. Removes nucleotide residues following the 3'-CCA terminus of tRNAs; can also add nucleotides to the ends of RNA molecules by using nucleoside diphosphates as substrates, but this may not be physiologically important. Probably plays a role in initiation of 16S rRNA degradation (leading to ribosome degradation) during starvation. The chain is Ribonuclease PH from Salinispora arenicola (strain CNS-205).